The primary structure comprises 161 residues: Cytochrome c-type biogenesis protein CcmE (161 aa).

At 1–8 the chain is on the cytoplasmic side; sequence MNARRKKR. The chain crosses the membrane as a helical; Signal-anchor for type II membrane protein span at residues 9 to 29; the sequence is LTLAVALIGGVAAIASLLLYA. Residues 30–161 are Periplasmic-facing; sequence LNSNLNLFYT…DYNEQQKTSY (132 aa). Positions 131 and 135 each coordinate heme.

The protein belongs to the CcmE/CycJ family.

The protein resides in the cell inner membrane. Functionally, heme chaperone required for the biogenesis of c-type cytochromes. Transiently binds heme delivered by CcmC and transfers the heme to apo-cytochromes in a process facilitated by CcmF and CcmH. The chain is Cytochrome c-type biogenesis protein CcmE from Shewanella sediminis (strain HAW-EB3).